Consider the following 536-residue polypeptide: Phosphoenolpyruvate carboxykinase (ATP) (536 aa).

Residues arginine 61, tyrosine 195, and lysine 201 each coordinate substrate. ATP-binding positions include lysine 201, histidine 220, and glycine 236 to threonine 244. Mn(2+) contacts are provided by lysine 201 and histidine 220. Aspartate 257 is a Mn(2+) binding site. Residues glutamate 285, arginine 322, and threonine 447 each coordinate ATP. Arginine 322 is a substrate binding site.

Belongs to the phosphoenolpyruvate carboxykinase (ATP) family. The cofactor is Mn(2+).

It localises to the cytoplasm. It carries out the reaction oxaloacetate + ATP = phosphoenolpyruvate + ADP + CO2. The protein operates within carbohydrate biosynthesis; gluconeogenesis. Functionally, involved in the gluconeogenesis. Catalyzes the conversion of oxaloacetate (OAA) to phosphoenolpyruvate (PEP) through direct phosphoryl transfer between the nucleoside triphosphate and OAA. The chain is Phosphoenolpyruvate carboxykinase (ATP) from Agrobacterium fabrum (strain C58 / ATCC 33970) (Agrobacterium tumefaciens (strain C58)).